The sequence spans 86 residues: UPF0512 protein V (86 aa).

This sequence belongs to the UPF0512 family.

The polypeptide is UPF0512 protein V (Dictyostelium discoideum (Social amoeba)).